Consider the following 431-residue polypeptide: Nuclear bridge Ish domain protein les1 (431 aa).

A signal peptide spans 1–21 (MQPRFLLHGALLALGIQLCLS).

It is found in the nucleus inner membrane. Functionally, inner nuclear envelope protein involved in nuclear fission, which is achieved via local disassembly of nuclear pores within the narrow bridge that links segregating daughter nuclei. Les1 restricts the process of local nuclear envelope breakdown to the bridge midzone to prevent the leakage of material from daughter nuclei during mitosis. The protein is Nuclear bridge Ish domain protein les1 of Schizosaccharomyces pombe (strain 972 / ATCC 24843) (Fission yeast).